A 326-amino-acid chain; its full sequence is Mitochondrial glycine transporter (326 aa).

3 Solcar repeats span residues 45-134, 141-225, and 237-321; these read HPVI…SKQY, PTAL…TRTA, and LIPL…MMAR. The next 6 helical transmembrane spans lie at 51 to 76, 109 to 135, 147 to 172, 200 to 223, 241 to 267, and 296 to 314; these read FLCG…TRLQ, GMSP…KQYF, VILG…TRYE, GLTA…SQTR, INFS…KTHM, and GSVP…AWTV.

This sequence belongs to the mitochondrial carrier (TC 2.A.29) family. SLC25A38 subfamily.

Its subcellular location is the mitochondrion inner membrane. It catalyses the reaction glycine(in) = glycine(out). Its function is as follows. Mitochondrial glycine transporter that imports glycine into the mitochondrial matrix. Plays an important role in providing glycine for the first enzymatic step in heme biosynthesis, the condensation of glycine with succinyl-CoA to produce 5-aminolevulinate (ALA) in the mitochondrial matrix. Required during erythropoiesis. Functionally, plays a role as pro-apoptotic protein that induces caspase-dependent apoptosis. In Mus musculus (Mouse), this protein is Mitochondrial glycine transporter.